The sequence spans 429 residues: Zinc metalloproteinase nas-17 (429 aa).

Residues 1 to 21 (MFLRPSTLLLTLFLALVAGSA) form the signal peptide. N54 is a glycosylation site (N-linked (GlcNAc...) asparagine). The Peptidase M12A domain occupies 62 to 251 (RQITKIWKKW…VNINVRYSCG (190 aa)). 4 cysteine pairs are disulfide-bonded: C104–C250, C125–C144, C252–C272, and C274–C283. H152 serves as a coordination point for Zn(2+). E153 is an active-site residue. Positions 156 and 162 each coordinate Zn(2+). Residues 245–284 (NVRYSCGCAKSLTCENGGYTNPSNCATCVCPTGFAGTLCN) enclose the EGF-like domain.

Zn(2+) serves as cofactor.

Its subcellular location is the secreted. Functionally, metalloprotease. The polypeptide is Zinc metalloproteinase nas-17 (nas-17) (Caenorhabditis elegans).